We begin with the raw amino-acid sequence, 402 residues long: NADH-quinone oxidoreductase subunit D (402 aa).

The protein belongs to the complex I 49 kDa subunit family. In terms of assembly, NDH-1 is composed of 14 different subunits. Subunits NuoB, C, D, E, F, and G constitute the peripheral sector of the complex.

Its subcellular location is the cell inner membrane. It catalyses the reaction a quinone + NADH + 5 H(+)(in) = a quinol + NAD(+) + 4 H(+)(out). NDH-1 shuttles electrons from NADH, via FMN and iron-sulfur (Fe-S) centers, to quinones in the respiratory chain. The immediate electron acceptor for the enzyme in this species is believed to be ubiquinone. Couples the redox reaction to proton translocation (for every two electrons transferred, four hydrogen ions are translocated across the cytoplasmic membrane), and thus conserves the redox energy in a proton gradient. In Cereibacter sphaeroides (strain ATCC 17025 / ATH 2.4.3) (Rhodobacter sphaeroides), this protein is NADH-quinone oxidoreductase subunit D.